Consider the following 701-residue polypeptide: 1,4-alpha-glucan branching enzyme GlgB (701 aa).

The active-site Nucleophile is the Asp381. The active-site Proton donor is the Glu434.

It belongs to the glycosyl hydrolase 13 family. GlgB subfamily. As to quaternary structure, monomer.

It catalyses the reaction Transfers a segment of a (1-&gt;4)-alpha-D-glucan chain to a primary hydroxy group in a similar glucan chain.. The protein operates within glycan biosynthesis; glycogen biosynthesis. Functionally, catalyzes the formation of the alpha-1,6-glucosidic linkages in glycogen by scission of a 1,4-alpha-linked oligosaccharide from growing alpha-1,4-glucan chains and the subsequent attachment of the oligosaccharide to the alpha-1,6 position. The chain is 1,4-alpha-glucan branching enzyme GlgB from Jannaschia sp. (strain CCS1).